The chain runs to 522 residues: ATP synthase subunit alpha (522 aa).

176–183 (GDRQTGKT) provides a ligand contact to ATP.

It belongs to the ATPase alpha/beta chains family. As to quaternary structure, F-type ATPases have 2 components, CF(1) - the catalytic core - and CF(0) - the membrane proton channel. CF(1) has five subunits: alpha(3), beta(3), gamma(1), delta(1), epsilon(1). CF(0) has four main subunits: a(1), b(1), b'(1) and c(9-12).

The protein resides in the cell membrane. The enzyme catalyses ATP + H2O + 4 H(+)(in) = ADP + phosphate + 5 H(+)(out). Produces ATP from ADP in the presence of a proton gradient across the membrane. The alpha chain is a regulatory subunit. The chain is ATP synthase subunit alpha from Chloroflexus aurantiacus (strain ATCC 29366 / DSM 635 / J-10-fl).